Here is a 548-residue protein sequence, read N- to C-terminus: Probable malate:quinone oxidoreductase (548 aa).

This sequence belongs to the MQO family. Requires FAD as cofactor.

The enzyme catalyses (S)-malate + a quinone = a quinol + oxaloacetate. It functions in the pathway carbohydrate metabolism; tricarboxylic acid cycle; oxaloacetate from (S)-malate (quinone route): step 1/1. This is Probable malate:quinone oxidoreductase from Escherichia coli O6:K15:H31 (strain 536 / UPEC).